A 347-amino-acid chain; its full sequence is NADH-ubiquinone oxidoreductase chain 2 (347 aa).

9 helical membrane passes run 5–22 (ILTIIMSTVISGTIMVLI), 26–45 (WLTVWIGFEMNMLAIVPILM), 60–80 (FLTQATASMLLMLGIIINLLL), 150–170 (NPNLLMTMAALSVLVGGWGGL), 178–198 (ILAYSSIAHMGWMIAVTTYNP), 200–220 (LMMLNLAIYIMMTLGTFMLFM), 242–262 (SLILMIMLSLGGLPPLSGFIP), 274–294 (NMIIMATFMAITALLNLYFYM), and 324–344 (TLLPPLIVISTMLLPLTPMML).

This sequence belongs to the complex I subunit 2 family. In terms of assembly, core subunit of respiratory chain NADH dehydrogenase (Complex I) which is composed of 45 different subunits. Interacts with TMEM242.

It localises to the mitochondrion inner membrane. The catalysed reaction is a ubiquinone + NADH + 5 H(+)(in) = a ubiquinol + NAD(+) + 4 H(+)(out). Functionally, core subunit of the mitochondrial membrane respiratory chain NADH dehydrogenase (Complex I) which catalyzes electron transfer from NADH through the respiratory chain, using ubiquinone as an electron acceptor. Essential for the catalytic activity and assembly of complex I. The polypeptide is NADH-ubiquinone oxidoreductase chain 2 (Martes flavigula (Yellow-throated marten)).